Reading from the N-terminus, the 421-residue chain is Imidazolonepropionase (421 aa).

Fe(3+) contacts are provided by H81 and H83. H81 and H83 together coordinate Zn(2+). 4-imidazolone-5-propanoate-binding residues include R90, Y153, and H186. An N-formimidoyl-L-glutamate-binding site is contributed by Y153. Residue H251 coordinates Fe(3+). A Zn(2+)-binding site is contributed by H251. E254 contacts 4-imidazolone-5-propanoate. Residue D326 participates in Fe(3+) binding. D326 is a Zn(2+) binding site. Positions 328 and 330 each coordinate N-formimidoyl-L-glutamate. A 4-imidazolone-5-propanoate-binding site is contributed by S331.

It belongs to the metallo-dependent hydrolases superfamily. HutI family. Requires Zn(2+) as cofactor. The cofactor is Fe(3+).

Its subcellular location is the cytoplasm. The catalysed reaction is 4-imidazolone-5-propanoate + H2O = N-formimidoyl-L-glutamate. The protein operates within amino-acid degradation; L-histidine degradation into L-glutamate; N-formimidoyl-L-glutamate from L-histidine: step 3/3. Its function is as follows. Catalyzes the hydrolytic cleavage of the carbon-nitrogen bond in imidazolone-5-propanoate to yield N-formimidoyl-L-glutamate. It is the third step in the universal histidine degradation pathway. The protein is Imidazolonepropionase of Streptococcus gordonii (strain Challis / ATCC 35105 / BCRC 15272 / CH1 / DL1 / V288).